The sequence spans 369 residues: Cobalt-precorrin-5B C(1)-methyltransferase (369 aa).

The protein belongs to the CbiD family.

The catalysed reaction is Co-precorrin-5B + S-adenosyl-L-methionine = Co-precorrin-6A + S-adenosyl-L-homocysteine. The protein operates within cofactor biosynthesis; adenosylcobalamin biosynthesis; cob(II)yrinate a,c-diamide from sirohydrochlorin (anaerobic route): step 6/10. Functionally, catalyzes the methylation of C-1 in cobalt-precorrin-5B to form cobalt-precorrin-6A. This Geobacter metallireducens (strain ATCC 53774 / DSM 7210 / GS-15) protein is Cobalt-precorrin-5B C(1)-methyltransferase.